The sequence spans 433 residues: AP-2 complex subunit mu (433 aa).

One can recognise an MHD domain in the interval 168-432 (RNELFLDVLE…IGRSGIYETR (265 aa)). Positions 339, 343, and 352 each coordinate a 1,2-diacyl-sn-glycero-3-phospho-(1D-myo-inositol-3,4,5-trisphosphate).

It belongs to the adaptor complexes medium subunit family. In terms of assembly, adaptor protein complex 2 (AP-2) is a heterotetramer composed of two large adaptins (alpha-type subunit and beta-type subunit), a medium adaptin (mu-type subunit) and a small adaptin (sigma-type subunit).

Its subcellular location is the cell membrane. The protein localises to the membrane. It is found in the coated pit. In terms of biological role, component of the adaptor complexes which link clathrin to receptors in coated vesicles. Clathrin-associated protein complexes are believed to interact with the cytoplasmic tails of membrane proteins, leading to their selection and concentration. AP50 is a subunit of the plasma membrane adaptor. The complex binds polyphosphoinositide-containing lipids. This Gallus gallus (Chicken) protein is AP-2 complex subunit mu (AP2M1).